A 932-amino-acid chain; its full sequence is Glycine dehydrogenase (decarboxylating) (932 aa).

Lys685 bears the N6-(pyridoxal phosphate)lysine mark.

It belongs to the GcvP family. In terms of assembly, the glycine cleavage system is composed of four proteins: P, T, L and H. It depends on pyridoxal 5'-phosphate as a cofactor.

The catalysed reaction is N(6)-[(R)-lipoyl]-L-lysyl-[glycine-cleavage complex H protein] + glycine + H(+) = N(6)-[(R)-S(8)-aminomethyldihydrolipoyl]-L-lysyl-[glycine-cleavage complex H protein] + CO2. Its function is as follows. The glycine cleavage system catalyzes the degradation of glycine. The P protein binds the alpha-amino group of glycine through its pyridoxal phosphate cofactor; CO(2) is released and the remaining methylamine moiety is then transferred to the lipoamide cofactor of the H protein. The protein is Glycine dehydrogenase (decarboxylating) of Brucella suis biovar 1 (strain 1330).